A 148-amino-acid chain; its full sequence is Lysozyme C-1 (148 aa).

Residues 1 to 18 (MKALLVLGFLLLSASVQA) form the signal peptide. Residues 19 to 148 (KIYERCQFAR…LSGYIRNCGV (130 aa)) form the C-type lysozyme domain. Intrachain disulfides connect Cys24–Cys146, Cys48–Cys134, Cys83–Cys99, and Cys95–Cys113. Catalysis depends on residues Glu53 and Asp71.

The protein belongs to the glycosyl hydrolase 22 family. Monomer. As to expression, expressed in lung, small intestine and spleen.

It localises to the secreted. The enzyme catalyses Hydrolysis of (1-&gt;4)-beta-linkages between N-acetylmuramic acid and N-acetyl-D-glucosamine residues in a peptidoglycan and between N-acetyl-D-glucosamine residues in chitodextrins.. In terms of biological role, lysozymes have primarily a bacteriolytic function; those in tissues and body fluids are associated with the monocyte-macrophage system and enhance the activity of immunoagents. In the intestine they may also have a digestive function. The protein is Lysozyme C-1 (Lyz1) of Rattus norvegicus (Rat).